The sequence spans 126 residues: Protein VraC (126 aa).

In Staphylococcus haemolyticus (strain JCSC1435), this protein is Protein VraC.